Consider the following 242-residue polypeptide: MNIDVITLFPDFFTSGLQSGLLGKALANHIATVNLINPRDFALDKHHRVDDIPYGGGVGMVLKPEPIFAAVNSVHRLPSTQVILLTPQGSPLTQTTLQDLSTNYQQLILICGHYEGVDERIRYLADREISLGDFILTCGEIPALALINGVVRLLPGTVGKVESLKAESFEDGLLDYPQYTRPAVFQDWQIPEVLRSGNHQLIAQWRKEQQIQRTQQRRPDLWEKFEERRKQKIEDRKHEQAE.

S-adenosyl-L-methionine contacts are provided by residues glycine 112 and 131 to 136 (LGDFIL).

Belongs to the RNA methyltransferase TrmD family. In terms of assembly, homodimer.

It is found in the cytoplasm. It catalyses the reaction guanosine(37) in tRNA + S-adenosyl-L-methionine = N(1)-methylguanosine(37) in tRNA + S-adenosyl-L-homocysteine + H(+). Functionally, specifically methylates guanosine-37 in various tRNAs. The sequence is that of tRNA (guanine-N(1)-)-methyltransferase from Crocosphaera subtropica (strain ATCC 51142 / BH68) (Cyanothece sp. (strain ATCC 51142)).